A 204-amino-acid chain; its full sequence is MIAFLSGHLVAIEWGERSSLTVEVQGIGYRVKAPARFLKQLPPIGEPVRVFTHLVVRETELVLYGFGSPAERDVFVELIKVSGVGPALGLALLNTFGLPELVQAVVTENVRLLSLTPGVGHKTAQRLALELKTKLAHWRQGLENADRPLAGGPPPAIREEVEMALLALGYSLQEIQAALQALPSQPRPTEEWLRDAITYLSRQP.

The segment at 1 to 67 (MIAFLSGHLV…ETELVLYGFG (67 aa)) is domain I. The domain II stretch occupies residues 68–146 (SPAERDVFVE…HWRQGLENAD (79 aa)). The segment at 147–156 (RPLAGGPPPA) is flexible linker. The domain III stretch occupies residues 156–204 (AIREEVEMALLALGYSLQEIQAALQALPSQPRPTEEWLRDAITYLSRQP).

This sequence belongs to the RuvA family. In terms of assembly, homotetramer. Forms an RuvA(8)-RuvB(12)-Holliday junction (HJ) complex. HJ DNA is sandwiched between 2 RuvA tetramers; dsDNA enters through RuvA and exits via RuvB. An RuvB hexamer assembles on each DNA strand where it exits the tetramer. Each RuvB hexamer is contacted by two RuvA subunits (via domain III) on 2 adjacent RuvB subunits; this complex drives branch migration. In the full resolvosome a probable DNA-RuvA(4)-RuvB(12)-RuvC(2) complex forms which resolves the HJ.

Its subcellular location is the cytoplasm. The RuvA-RuvB-RuvC complex processes Holliday junction (HJ) DNA during genetic recombination and DNA repair, while the RuvA-RuvB complex plays an important role in the rescue of blocked DNA replication forks via replication fork reversal (RFR). RuvA specifically binds to HJ cruciform DNA, conferring on it an open structure. The RuvB hexamer acts as an ATP-dependent pump, pulling dsDNA into and through the RuvAB complex. HJ branch migration allows RuvC to scan DNA until it finds its consensus sequence, where it cleaves and resolves the cruciform DNA. In Synechococcus sp. (strain JA-3-3Ab) (Cyanobacteria bacterium Yellowstone A-Prime), this protein is Holliday junction branch migration complex subunit RuvA.